Reading from the N-terminus, the 325-residue chain is Probable ABC transporter permease YtrD (325 aa).

8 helical membrane-spanning segments follow: residues 16 to 36 (VALVITILVFILGNPLSILNM), 63 to 83 (SSFISLFWIWGVVLAVSQLGI), 113 to 133 (MVIVVPQLIGYVLSVLLIMLL), 146 to 166 (LGMIIVSMLAYSLVMAGGALT), 179 to 199 (VAISPFLLISLPVINLEILFG), 233 to 253 (YLVIPAIMTIIFYIIGYISFV), 272 to 292 (PVQIIVIIIGIMGFGYFGFTA), and 298 to 318 (GYLIGMGTGAVIGFLISYFAI).

Belongs to the ABC-5 integral membrane protein family. As to quaternary structure, the complex is composed of 2 ATP-binding proteins (YtrB and YtrE), 2 transmembrane proteins (YtrC and YtrD) and a solute-binding protein (YtrF).

The protein localises to the cell membrane. Functionally, part of the ABC transporter complex YtrBCDEF that plays a role in acetoin utilization during stationary phase and sporulation. This chain is Probable ABC transporter permease YtrD (ytrD), found in Bacillus subtilis (strain 168).